The chain runs to 319 residues: HPr kinase/phosphorylase (319 aa).

Residues His-146 and Lys-167 contribute to the active site. 161–168 is an ATP binding site; it reads GESGLGKS. Residue Ser-168 participates in Mg(2+) binding. Catalysis depends on Asp-185, which acts as the Proton acceptor; for phosphorylation activity. Proton donor; for dephosphorylation activity. The interval 209-218 is important for the catalytic mechanism of both phosphorylation and dephosphorylation; it reads LEVRGIGLLD. Position 210 (Glu-210) interacts with Mg(2+). The active site involves Arg-252. The segment at 273–278 is important for the catalytic mechanism of dephosphorylation; that stretch reads QVVAGR.

It belongs to the HPrK/P family. In terms of assembly, homohexamer. Mg(2+) is required as a cofactor.

The catalysed reaction is [HPr protein]-L-serine + ATP = [HPr protein]-O-phospho-L-serine + ADP + H(+). It carries out the reaction [HPr protein]-O-phospho-L-serine + phosphate + H(+) = [HPr protein]-L-serine + diphosphate. Functionally, catalyzes the ATP- as well as the pyrophosphate-dependent phosphorylation of a specific serine residue in HPr, a phosphocarrier protein of the phosphoenolpyruvate-dependent sugar phosphotransferase system (PTS). HprK/P also catalyzes the pyrophosphate-producing, inorganic phosphate-dependent dephosphorylation (phosphorolysis) of seryl-phosphorylated HPr (P-Ser-HPr). This Variovorax paradoxus (strain S110) protein is HPr kinase/phosphorylase.